We begin with the raw amino-acid sequence, 596 residues long: Sensor protein ChvG (596 aa).

The segment at 1 to 22 (MLKKTPETVSDSDDAEERGSER) is disordered. Residues 1–47 (MLKKTPETVSDSDDAEERGSERRHRIHPLTIIRRIFGNAVFSSLTRR) lie on the Cytoplasmic side of the membrane. A helical transmembrane segment spans residues 48 to 68 (ILFFNVAATVVLVGGILYLNQ). Topologically, residues 69 to 283 (FREGLIDARV…VHAERLAIMR (215 aa)) are periplasmic. A helical transmembrane segment spans residues 284–304 (VFGIATLVNIVLSLLLSSTIA). The HAMP domain maps to 301 to 356 (STIATPLRRLSAAAIRVRRGARTREEIPDFSARQDEIGNLSIALREMTTALYDRID). The Cytoplasmic portion of the chain corresponds to 305–596 (TPLRRLSAAA…SLPAAETHER (292 aa)). One can recognise a Histidine kinase domain in the interval 364 to 592 (DVSHELKNPL…RFTLSLPAAE (229 aa)). Residue H367 is modified to Phosphohistidine.

It is found in the cell inner membrane. The catalysed reaction is ATP + protein L-histidine = ADP + protein N-phospho-L-histidine.. In terms of biological role, member of a two-component regulatory system ChvG/ChvI. Activates ChvI by phosphorylation (Potential). This Agrobacterium fabrum (strain C58 / ATCC 33970) (Agrobacterium tumefaciens (strain C58)) protein is Sensor protein ChvG (chvG).